The following is a 258-amino-acid chain: Dihydroorotate dehydrogenase B (NAD(+)), electron transfer subunit (258 aa).

The region spanning 2 to 100 is the FAD-binding FR-type domain; the sequence is ILKENLTVVS…LGPQGNGFDL (99 aa). Residues 51–54, 68–70, and 75–76 each bind FAD; these read RPIS, IYR, and GT. [2Fe-2S] cluster is bound by residues C220, C225, C228, and C244.

It belongs to the PyrK family. In terms of assembly, heterotetramer of 2 PyrK and 2 PyrD type B subunits. The cofactor is [2Fe-2S] cluster. FAD serves as cofactor.

It participates in pyrimidine metabolism; UMP biosynthesis via de novo pathway; orotate from (S)-dihydroorotate (NAD(+) route): step 1/1. Its function is as follows. Responsible for channeling the electrons from the oxidation of dihydroorotate from the FMN redox center in the PyrD type B subunit to the ultimate electron acceptor NAD(+). The polypeptide is Dihydroorotate dehydrogenase B (NAD(+)), electron transfer subunit (Streptococcus mutans serotype c (strain ATCC 700610 / UA159)).